Here is a 349-residue protein sequence, read N- to C-terminus: Protein-glutamate methylesterase/protein-glutamine glutaminase 1 (349 aa).

One can recognise a Response regulatory domain in the interval 2–119 (RTLIVDDSAF…DVNKAEKELV (118 aa)). Residue Asp53 is modified to 4-aspartylphosphate. Residues 158–345 (ILIGSSTGGP…EEIVKRLEAK (188 aa)) form the CheB-type methylesterase domain. Residues Ser163, His190, and Asp287 contribute to the active site.

This sequence belongs to the CheB family. Post-translationally, phosphorylated by CheA. Phosphorylation of the N-terminal regulatory domain activates the methylesterase activity.

Its subcellular location is the cytoplasm. The catalysed reaction is [protein]-L-glutamate 5-O-methyl ester + H2O = L-glutamyl-[protein] + methanol + H(+). It carries out the reaction L-glutaminyl-[protein] + H2O = L-glutamyl-[protein] + NH4(+). Functionally, involved in chemotaxis. Part of a chemotaxis signal transduction system that modulates chemotaxis in response to various stimuli. Catalyzes the demethylation of specific methylglutamate residues introduced into the chemoreceptors (methyl-accepting chemotaxis proteins or MCP) by CheR. Also mediates the irreversible deamidation of specific glutamine residues to glutamic acid. In Methanosarcina acetivorans (strain ATCC 35395 / DSM 2834 / JCM 12185 / C2A), this protein is Protein-glutamate methylesterase/protein-glutamine glutaminase 1.